The chain runs to 189 residues: Ribonuclease M5 (189 aa).

Residues Lys-8 to Ala-91 enclose the Toprim domain. Glu-14, Asp-60, and Asp-62 together coordinate Mg(2+).

Belongs to the ribonuclease M5 family. The cofactor is Mg(2+).

The protein localises to the cytoplasm. It catalyses the reaction Endonucleolytic cleavage of RNA, removing 21 and 42 nucleotides, respectively, from the 5'- and 3'-termini of a 5S-rRNA precursor.. In terms of biological role, required for correct processing of both the 5' and 3' ends of 5S rRNA precursor. Cleaves both sides of a double-stranded region yielding mature 5S rRNA in one step. The polypeptide is Ribonuclease M5 (Bacillus cereus (strain ATCC 14579 / DSM 31 / CCUG 7414 / JCM 2152 / NBRC 15305 / NCIMB 9373 / NCTC 2599 / NRRL B-3711)).